We begin with the raw amino-acid sequence, 687 residues long: MRDPVFTGTAMAYHPFHAHRPTDFPMSAFLAAAQPSFFPALTLPPGALTKPIPDHTLAGAAEAGLHPALSHHHQAAHLRSLKSLEPEEEVEDDPKVTLEAKDLWDQFHKLGTEMVITKSGRRMFPPFKVRINGLDKKAKYILLMDIVAADDCRYKFHNSRWMVAGKADPEMPKRMYIHPDSPATGEQWMAKPVAFHKLKLTNNISDKHGFTILNSMHKYQPRFHIVRANDILKLPYSTFRTYVFPETDFIAVTAYQNDKITQLKIDNNPFAKGFRDTGNGRREKRKQLTLPSLRMYEDQCKVDRDGADSDASSSEPTTGRDAGHSPGPVSSPLRFNRGSRDDKTCTDSEHEMDHQNDRCGGSSSPAPEPSSPFRSRSEDWGREKPIAEKKDDYPDSRKTSDSIFSIRNLEKDKLESRSRKDTDSSKKDTENSGISGSKDSFSPLMVQTESPSHFGAGHLQSLALSGLHSQQFFNPLNTGQPLLFHPGQFAMAPGAFSAMGMGHLLASVSGAGGLENGSLSAQGTGSTPSPFPFHLSQHMLASQGIPMPTFGGLFPYPYTYMAAAAAAASALPASSSTASSLSRNPFLSSSTRPRLRFNPYQLPVSIPQSTNLLTTGLPSGLNPSSESSKCGSREASPVPDHKSGASQRNGSPKTTMKESINELQNIQRLVSGLESQRETSSPRDSPK.

The segment at residues 103-276 (LWDQFHKLGT…NNPFAKGFRD (174 aa)) is a DNA-binding region (T-box). Disordered stretches follow at residues 303–452 (DRDG…ESPS) and 611–687 (NLLT…DSPK). 3 stretches are compositionally biased toward basic and acidic residues: residues 338–357 (GSRD…HQND), 375–400 (SRSE…RKTS), and 408–430 (NLEK…KDTE). Polar residues-rich tracts occupy residues 431–451 (NSGI…TESP), 611–630 (NLLT…SSKC), and 644–654 (GASQRNGSPKT). Residues 654–681 (TTMKESINELQNIQRLVSGLESQRETSS) are a coiled coil. Residues 675–687 (SQRETSSPRDSPK) show a composition bias toward basic and acidic residues.

As to quaternary structure, binds DNA as a monomer. As to expression, expressed in the axial mesoderm, notably, in the notochordal precursor cells immediately before formation of the notochord and in the chordoneural hinge of the tail bud, after the notochord is formed. In addition, its expression is detected in the ventral forebrain, sensory neurons, fin buds and excretory system.

The protein resides in the nucleus. Functionally, transcription factor which acts as a transcriptional repressor. May also function as a transcriptional activator. Binds to the palindromic T site 5'-TTCACACCTAGGTGTGAA-3' DNA sequence, or a half-site, which are present in the regulatory region of several genes. Involved in the transcriptional regulation of genes required for mesoderm differentiation. Plays a role in the specification of late notochordal precursor cells and formation of the differentiated notochord. Required for cardiac atrioventricular canal formation. In Danio rerio (Zebrafish), this protein is T-box transcription factor TBX2b (tbx2b).